Reading from the N-terminus, the 142-residue chain is Holo-[acyl-carrier-protein] synthase (142 aa).

2 residues coordinate Mg(2+): aspartate 8 and glutamate 57.

Belongs to the P-Pant transferase superfamily. AcpS family. Requires Mg(2+) as cofactor.

It is found in the cytoplasm. The catalysed reaction is apo-[ACP] + CoA = holo-[ACP] + adenosine 3',5'-bisphosphate + H(+). Its function is as follows. Transfers the 4'-phosphopantetheine moiety from coenzyme A to a Ser of acyl-carrier-protein. The polypeptide is Holo-[acyl-carrier-protein] synthase (Ruegeria sp. (strain TM1040) (Silicibacter sp.)).